The sequence spans 95 residues: Aspartyl/glutamyl-tRNA(Asn/Gln) amidotransferase subunit C (95 aa).

It belongs to the GatC family. Heterotrimer of A, B and C subunits.

It catalyses the reaction L-glutamyl-tRNA(Gln) + L-glutamine + ATP + H2O = L-glutaminyl-tRNA(Gln) + L-glutamate + ADP + phosphate + H(+). It carries out the reaction L-aspartyl-tRNA(Asn) + L-glutamine + ATP + H2O = L-asparaginyl-tRNA(Asn) + L-glutamate + ADP + phosphate + 2 H(+). In terms of biological role, allows the formation of correctly charged Asn-tRNA(Asn) or Gln-tRNA(Gln) through the transamidation of misacylated Asp-tRNA(Asn) or Glu-tRNA(Gln) in organisms which lack either or both of asparaginyl-tRNA or glutaminyl-tRNA synthetases. The reaction takes place in the presence of glutamine and ATP through an activated phospho-Asp-tRNA(Asn) or phospho-Glu-tRNA(Gln). The polypeptide is Aspartyl/glutamyl-tRNA(Asn/Gln) amidotransferase subunit C (Campylobacter concisus (strain 13826)).